The primary structure comprises 495 residues: ATP synthase subunit beta, chloroplastic (495 aa).

Residue 172–179 participates in ATP binding; that stretch reads GGAGVGKT.

It belongs to the ATPase alpha/beta chains family. In terms of assembly, F-type ATPases have 2 components, CF(1) - the catalytic core - and CF(0) - the membrane proton channel. CF(1) has five subunits: alpha(3), beta(3), gamma(1), delta(1), epsilon(1). CF(0) has four main subunits: a(1), b(1), b'(1) and c(9-12).

The protein resides in the plastid. The protein localises to the chloroplast thylakoid membrane. The enzyme catalyses ATP + H2O + 4 H(+)(in) = ADP + phosphate + 5 H(+)(out). Produces ATP from ADP in the presence of a proton gradient across the membrane. The catalytic sites are hosted primarily by the beta subunits. The protein is ATP synthase subunit beta, chloroplastic of Pteridium aquilinum (Bracken fern).